Reading from the N-terminus, the 431-residue chain is WD repeat-containing protein 18 (431 aa).

WD repeat units lie at residues 36-75, 78-116, 119-158, 170-211, 213-257, and 267-306; these read GGQA…QLQQ, MCPG…LLVI, RHYQ…QADP, QHTL…LLLS, LFDM…SFQP, and GHRN…CLRT.

This sequence belongs to the WD repeat IPI3/WDR18 family. As to quaternary structure, component of the 5FMC complex, at least composed of PELP1, LAS1L, TEX10, WDR18 and SENP3; the complex interacts with methylated CHTOP and ZNF148. Interacts with NOL9. Component of the PELP1 complex, composed of at least PELP1, TEX10 and WDR18. The complex interacts with pre-60S ribosome particles.

It is found in the nucleus. It localises to the nucleolus. Its subcellular location is the nucleoplasm. The protein localises to the cytoplasm. The protein resides in the dynein axonemal particle. In terms of biological role, functions as a component of the Five Friends of Methylated CHTOP (5FMC) complex; the 5FMC complex is recruited to ZNF148 by methylated CHTOP, leading to desumoylation of ZNF148 and subsequent transactivation of ZNF148 target genes. Component of the PELP1 complex involved in the nucleolar steps of 28S rRNA maturation and the subsequent nucleoplasmic transit of the pre-60S ribosomal subunit. May play a role during development. The sequence is that of WD repeat-containing protein 18 (Wdr18) from Mus musculus (Mouse).